The chain runs to 136 residues: Small ribosomal subunit protein uS9 (136 aa).

The protein belongs to the universal ribosomal protein uS9 family.

The protein is Small ribosomal subunit protein uS9 of Borrelia turicatae (strain 91E135).